Consider the following 116-residue polypeptide: MKGTSMGVAILAMIVMAQLMVHPSVAITCNDVTGNLTPCLPYLRSGGKPTPACCAGAKKLLGATRTQADRRTACKCAKTAAPQLKVRPDMASSLPGKCGISTSIPINPNVNCNTIP.

The signal sequence occupies residues 1–26 (MKGTSMGVAILAMIVMAQLMVHPSVA). 4 disulfides stabilise this stretch: C29-C76, C39-C53, C54-C98, and C74-C112.

The protein belongs to the plant LTP family. In germinating seeds, detected in the entire surface of the cotyledons, shoot meristem, inter-cotyledon space, primary xylem and immature vascular elements (at protein level). Expressed in seeds, but not the aerial parts of the plant.

The protein localises to the secreted. Its subcellular location is the extracellular space. It is found in the membrane. Functionally, plant non-specific lipid-transfer proteins transfer phospholipids as well as galactolipids across membranes. May play a role in wax or cutin deposition in the cell walls of expanding epidermal cells and certain secretory tissues. Permeabilizes the membrane of fungal spores, inhibits germination of the spores of the fungus F.solani at a concentration of 40 ug/ml. Inhibits the growth of F.solani with an IC(50) of 6.5 ug/ml, weakly inhibits the growth of the fungus A.alternata. Binds oleoyl-CoA. This chain is Non-specific lipid-transfer protein AP10, found in Helianthus annuus (Common sunflower).